The sequence spans 250 residues: Protein lin-28 homolog B (250 aa).

The interval 1-26 is disordered; that stretch reads MAEGGASKGGGEEPGKLPEPAEEESQ. The 74-residue stretch at 29–102 folds into the CSD domain; that stretch reads RGTGHCKWFN…GLESIRVTGP (74 aa). Phosphoserine occurs at positions 54, 96, 105, and 110. Residues 98 to 126 form a disordered region; that stretch reads RVTGPGGSPCLGSERRPKGKTLQKRKPKG. The Bipartite nuclear localization signal signature appears at 112–125; that stretch reads RRPKGKTLQKRKPK. Positions 114 to 125 are enriched in basic residues; it reads PKGKTLQKRKPK. 2 CCHC-type zinc fingers span residues 127–144 and 149–166; these read DRCYNCGGLDHHAKECSL and KKCHYCQSIMHMVANCPH. Positions 129, 132, 137, 142, 151, 154, 159, and 164 each coordinate Zn(2+). The segment at 169-250 is disordered; that stretch reads VAQPPASSQG…GPSVQKRKKT (82 aa). The segment covering 173 to 191 has biased composition (polar residues); the sequence is PASSQGRQEAESQPCTSTL. A Phosphoserine modification is found at Ser-203. Over residues 210–219 the composition is skewed to basic and acidic residues; that stretch reads ARAEISERSG. The span at 220-231 shows a compositional bias: polar residues; the sequence is RSPQEASSTKSS. Residues 239-250 carry the Nucleolar localization signal motif; the sequence is KKGPSVQKRKKT.

Belongs to the lin-28 family. In terms of tissue distribution, expressed at high levels in the placenta and, at mucher lower, in testis and fetal liver. Isoform 1 is only detected in placenta and in moderately and poorly differentiated hepatocellular carcinoma cells (at protein level). Isoform 2 is detected in fetal liver, non-tumor liver tissues, as well as well-differentiated tumor tissues (at protein level). Tends to be up-regulated in triple-negative (ER-,PR-,HER2-) breast tumors, as well as in liver, ovarian, and thyroid carcinomas.

The protein localises to the nucleus. It localises to the nucleolus. It is found in the cytoplasm. Suppressor of microRNA (miRNA) biogenesis, including that of let-7 and possibly of miR107, miR-143 and miR-200c. Binds primary let-7 transcripts (pri-let-7), including pri-let-7g and pri-let-7a-1, and sequester them in the nucleolus, away from the microprocessor complex, hence preventing their processing into mature miRNA. Does not act on pri-miR21. The repression of let-7 expression is required for normal development and contributes to maintain the pluripotent state of embryonic stem cells by preventing let-7-mediated differentiation. When overexpressed, recruits ZCCHC11/TUT4 uridylyltransferase to pre-let-7 transcripts, leading to their terminal uridylation and degradation. This activity might not be relevant in vivo, as LIN28B-mediated inhibition of let-7 miRNA maturation appears to be ZCCHC11-independent. Interaction with target pre-miRNAs occurs via an 5'-GGAG-3' motif in the pre-miRNA terminal loop. Mediates MYC-induced let-7 repression. When overexpressed, isoform 1 stimulates growth of the breast adenocarcinoma cell line MCF-7. Isoform 2 has no effect on cell growth. The sequence is that of Protein lin-28 homolog B (LIN28B) from Homo sapiens (Human).